Here is a 384-residue protein sequence, read N- to C-terminus: Lipid-A-disaccharide synthase (384 aa).

Belongs to the LpxB family.

It carries out the reaction a lipid X + a UDP-2-N,3-O-bis[(3R)-3-hydroxyacyl]-alpha-D-glucosamine = a lipid A disaccharide + UDP + H(+). Its pathway is bacterial outer membrane biogenesis; LPS lipid A biosynthesis. Condensation of UDP-2,3-diacylglucosamine and 2,3-diacylglucosamine-1-phosphate to form lipid A disaccharide, a precursor of lipid A, a phosphorylated glycolipid that anchors the lipopolysaccharide to the outer membrane of the cell. The chain is Lipid-A-disaccharide synthase from Geobacter metallireducens (strain ATCC 53774 / DSM 7210 / GS-15).